We begin with the raw amino-acid sequence, 113 residues long: Large ribosomal subunit protein bL17 (113 aa).

This sequence belongs to the bacterial ribosomal protein bL17 family. In terms of assembly, part of the 50S ribosomal subunit. Contacts protein L32.

This chain is Large ribosomal subunit protein bL17, found in Alkaliphilus metalliredigens (strain QYMF).